The chain runs to 850 residues: Protein argonaute 8 (850 aa).

Residues 1–30 form a disordered region; it reads MDTTLPPPQHMEREPLKSKSSLLPMTRRGN. The region spanning 247–361 is the PAZ domain; it reads PVVDFLIANQ…FPIELCELVS (115 aa). Positions 518 to 811 constitute a Piwi domain; sequence QSILGEVPPK…AAAQMATAMK (294 aa).

This sequence belongs to the argonaute family. Ago subfamily.

In terms of biological role, involved in RNA-mediated post-transcriptional gene silencing (PTGS). Main component of the RNA-induced silencing complex (RISC) that binds to a short guide RNA such as a microRNA (miRNA) or small interfering RNA (siRNA). RISC uses the mature miRNA or siRNA as a guide for slicer-directed cleavage of homologous mRNAs to repress gene expression. This chain is Protein argonaute 8 (AGO8), found in Arabidopsis thaliana (Mouse-ear cress).